Consider the following 301-residue polypeptide: Protein FAM221A (301 aa).

Residues 235–271 (MHAPSTSSPQPLAGGNEVGPSTQLSSLRKPEEDDMAY) form a disordered region.

It belongs to the FAM221 family.

The protein is Protein FAM221A (Fam221a) of Mus musculus (Mouse).